The chain runs to 56 residues: Small ribosomal subunit protein uS14 (56 aa).

Zn(2+) contacts are provided by cysteine 21, cysteine 24, cysteine 39, and cysteine 42.

It belongs to the universal ribosomal protein uS14 family. Zinc-binding uS14 subfamily. In terms of assembly, part of the 30S ribosomal subunit. Zn(2+) serves as cofactor.

Functionally, binds 16S rRNA, required for the assembly of 30S particles. This is Small ribosomal subunit protein uS14 from Pyrococcus abyssi (strain GE5 / Orsay).